Consider the following 329-residue polypeptide: MAWPDLDPPRLAERPLSLQEALFVLEAPPEALPALAEAAIRVKEYFFGRRLKLVRLLNVKSGFCPEDCAYCAQSARSQAAIARYPLLSLEEILERAEEAQRLSARRFCLVAALRGPTPKVLERLGEAAQAIKARFPLELCASLGLLEEGMAEALKAAGFDYYNHNLNTAPSLYPRIATTHTYQDRLWTLKRAREAGLKLCSGVILGMGEGPKEVYEMALALRELGVESLPVNFLLPIPGTPLGDGRTVAGLTPERALKALILFRLLNPKAELRASAGRERYLGPYEPLAFRMVNSIFLQGYLTQPGSPWERDRALWESLDLDVEEGACG.

The 230-residue stretch at 46–275 folds into the Radical SAM core domain; the sequence is FFGRRLKLVR…LNPKAELRAS (230 aa). The [4Fe-4S] cluster site is built by Cys64, Cys68, and Cys71. [2Fe-2S] cluster is bound by residues Cys108, Cys140, Cys200, and Arg273.

It belongs to the radical SAM superfamily. Biotin synthase family. In terms of assembly, homodimer. [4Fe-4S] cluster serves as cofactor. It depends on [2Fe-2S] cluster as a cofactor.

The catalysed reaction is (4R,5S)-dethiobiotin + (sulfur carrier)-SH + 2 reduced [2Fe-2S]-[ferredoxin] + 2 S-adenosyl-L-methionine = (sulfur carrier)-H + biotin + 2 5'-deoxyadenosine + 2 L-methionine + 2 oxidized [2Fe-2S]-[ferredoxin]. Its pathway is cofactor biosynthesis; biotin biosynthesis; biotin from 7,8-diaminononanoate: step 2/2. In terms of biological role, catalyzes the conversion of dethiobiotin (DTB) to biotin by the insertion of a sulfur atom into dethiobiotin via a radical-based mechanism. This is Biotin synthase from Thermus thermophilus (strain ATCC 27634 / DSM 579 / HB8).